A 168-amino-acid polypeptide reads, in one-letter code: ATP synthase F(1) complex subunit delta, mitochondrial (168 aa).

The transit peptide at 1–22 directs the protein to the mitochondrion; it reads MLPAALLRRPGLGRLVRHARAY. An N6-acetyllysine; alternate mark is found at lysine 136 and lysine 165. N6-succinyllysine; alternate is present on residues lysine 136 and lysine 165.

The protein belongs to the ATPase epsilon chain family. Component of the ATP synthase complex composed at least of ATP5F1A/subunit alpha, ATP5F1B/subunit beta, ATP5MC1/subunit c (homooctomer), MT-ATP6/subunit a, MT-ATP8/subunit 8, ATP5ME/subunit e, ATP5MF/subunit f, ATP5MG/subunit g, ATP5MK/subunit k, ATP5MJ/subunit j, ATP5F1C/subunit gamma, ATP5F1D/subunit delta, ATP5F1E/subunit epsilon, ATP5PF/subunit F6, ATP5PB/subunit b, ATP5PD/subunit d, ATP5PO/subunit OSCP. ATP synthase complex consists of a soluble F(1) head domain (subunits alpha(3) and beta(3)) - the catalytic core - and a membrane F(0) domain - the membrane proton channel (subunits c, a, 8, e, f, g, k and j). These two domains are linked by a central stalk (subunits gamma, delta, and epsilon) rotating inside the F1 region and a stationary peripheral stalk (subunits F6, b, d, and OSCP). Component of a complex composed at least by ATPIF1, ATP5F1A, ATP5F1B, ATP5F1C AND ATP5F1E.

The protein localises to the mitochondrion. Its subcellular location is the mitochondrion inner membrane. Its function is as follows. Subunit delta, of the mitochondrial membrane ATP synthase complex (F(1)F(0) ATP synthase or Complex V) that produces ATP from ADP in the presence of a proton gradient across the membrane which is generated by electron transport complexes of the respiratory chain. ATP synthase complex consist of a soluble F(1) head domain - the catalytic core - and a membrane F(1) domain - the membrane proton channel. These two domains are linked by a central stalk rotating inside the F(1) region and a stationary peripheral stalk. During catalysis, ATP synthesis in the catalytic domain of F(1) is coupled via a rotary mechanism of the central stalk subunits to proton translocation. In vivo, can only synthesize ATP although its ATP hydrolase activity can be activated artificially in vitro. With the central stalk subunit gamma, is essential for the biogenesis of F(1) catalytic part of the ATP synthase complex namely in the formation of F1 assembly intermediate. The sequence is that of ATP synthase F(1) complex subunit delta, mitochondrial from Homo sapiens (Human).